A 1631-amino-acid polypeptide reads, in one-letter code: Ras GTPase-activating-like protein IQGAP3 (1631 aa).

In terms of domain architecture, Calponin-homology (CH) spans 34 to 149 (LCRLEEAKRW…YCIHALSLFL (116 aa)). Y162 is modified (phosphotyrosine). Phosphoserine is present on S539. IQ domains follow at residues 730-759 (NVGF…FLRT), 760-789 (WLPA…YFKA), 790-819 (NLDA…YFQK), and 820-849 (NVNS…APHP). Residues 1004–1253 (YLLLQLFKTA…LKFRKFIHRA (250 aa)) form the Ras-GAP domain. S1424 is subject to Phosphoserine.

In Homo sapiens (Human), this protein is Ras GTPase-activating-like protein IQGAP3 (IQGAP3).